A 602-amino-acid chain; its full sequence is Aspartate--tRNA(Asp/Asn) ligase (602 aa).

Residue Glu176 participates in L-aspartate binding. The aspartate stretch occupies residues 200 to 203 (QQFK). L-aspartate is bound by residues Arg222 and His452. 222 to 224 (RDE) contributes to the ATP binding site. ATP is bound at residue Glu490. An L-aspartate-binding site is contributed by Arg497. Position 542–545 (542–545 (GIDR)) interacts with ATP.

This sequence belongs to the class-II aminoacyl-tRNA synthetase family. Type 1 subfamily. In terms of assembly, homodimer.

It localises to the cytoplasm. It carries out the reaction tRNA(Asx) + L-aspartate + ATP = L-aspartyl-tRNA(Asx) + AMP + diphosphate. In terms of biological role, aspartyl-tRNA synthetase with relaxed tRNA specificity since it is able to aspartylate not only its cognate tRNA(Asp) but also tRNA(Asn). Reaction proceeds in two steps: L-aspartate is first activated by ATP to form Asp-AMP and then transferred to the acceptor end of tRNA(Asp/Asn). The chain is Aspartate--tRNA(Asp/Asn) ligase from Rickettsia conorii (strain ATCC VR-613 / Malish 7).